The primary structure comprises 1392 residues: MRPLAKDTGMSVASVTLASALQVRGEALSEEEIWSLLSLAAERLLEDLRNDSSDYVVCPWSLLLSAAGGLSFQDHVSHIEAAPFKAPELLQGSNEEGQPDASQMHVYSLGMTLYWSAGFRVPPNQPLQLQEPVHSLLLAMCEDQPRRRQPLQAVLEACRIHQEEVAVYPAPASLHISRLVGLVLGTISEVERRVVEENACEQRNRSCSLRSRLHQADGESPGAPASDALQPRRVSERSAETQSSLERCTAHSRNSFVNSTFAGAGPCDCEESPWYGSEPMLLAEAESSQPATSSPRNFLQRKGKFSRPEFILLAGEAPVTLHLPGSIVTKKGKSYLALRDLCVVLLNGRCLEVKCDMESTAGAVFNAVMSFANLEETTYFGLAYVEGEEFFFLDKDTRLCKVAPEGWREQHPKGSVDTFTLFLRIRFFVGHYRLLRHSLTRHQFYLQLRKDILEERLYCNDETLLQLGVLALQAEFGSYPKEQVEGKAYFRIQDYIPARLIERMTAIRVQVEVSEMHRLSSAPWGEDAELEFLEIVQQLPEYGVLVHRVSPEKKRPEGKMALGVCTKGIIVYEVRGSRRIATSQFPWRETGMISTHRKKLTITSSTTGKKYTFVTNSSKTCKYLLGLCSSQHWFNAQTGSKHPSHRFTGQDKFAQIASLSSAHQTQANPITWIQKLSCSENELCVPRLQDATGGQLGTSMENKQGFKEPGKERIGSSPYTGGEQLHSIGLNQKPAQTVFGTAGHSMCAGSNCLGRRTQICCFDSVSGSQNSKRKGLFGEPNQDIVCVMLKRDPVHGFGFVINEGEDAEQTRSGIFISSLIPGGPAERAKKIKPGGKILALNHISLEGFTFSMAVRMIQNSPDDMELIISQPKGVCGTIHSEEKNSTASSGMFCTDILSNRCQGRQSPHIHDQDRSVRGTEMAQGAGSCPPSPLQTNTGEIYFVELVKEDGTLGFSVTGGINTSVPHGGIYVKSIIPGGPAAKEGQILQGDRLLQVDGVSLCGLTHKQAVQCLKGPGQVARLVLERRGPRAAPQCPSADDRMGDVHMAVSLVTARPGRPASSVSVTDGPKFEVKLKKNSRGLGFSFVQMERGNCIHTKSDLVRIKRLFPGQPAEEHGAIAAGDIILAVNGKPIEGLAFQEVLHLLRGAPEEVTLLLCRPPPGILPEMEPGWQTPELSGDQRLTMATCAGSEQSPSLDQEDNWRDSTSLDAGEGLSPGPESSYKDVRQVKGDREKERPWAKSWMHPMESHPHVCKLHPEPETPALATSLEKDMRQNCYSVCDIRRLGSLELDRDGADGATCFLPESSSLTVDYEEYLTLTSASAGQLPCEECLEADSETIPLPQFCSLGALLKSSLPEESQGSESDWEDLDEPVDRDEVLRWTRSARQPLAAEP.

The 183-residue stretch at 15-197 (VTLASALQVR…SEVERRVVEE (183 aa)) folds into the KIND domain. The interval 211 to 246 (SRLHQADGESPGAPASDALQPRRVSERSAETQSSLE) is disordered. One can recognise an FERM domain in the interval 342-642 (CVVLLNGRCL…WFNAQTGSKH (301 aa)). The region spanning 775–861 (GLFGEPNQDI…MAVRMIQNSP (87 aa)) is the PDZ 1 domain. Residues 903–930 (GRQSPHIHDQDRSVRGTEMAQGAGSCPP) form a disordered region. Over residues 908–917 (HIHDQDRSVR) the composition is skewed to basic and acidic residues. An interaction with GRIN2A and GRIN2B region spans residues 937–1027 (TGEIYFVELV…VARLVLERRG (91 aa)). PDZ domains lie at 950-1035 (GTLG…PQCP) and 1079-1167 (RGLG…PEME). The tract at residues 1186 to 1236 (CAGSEQSPSLDQEDNWRDSTSLDAGEGLSPGPESSYKDVRQVKGDREKERP) is disordered. Residues 1220–1236 (SYKDVRQVKGDREKERP) are compositionally biased toward basic and acidic residues.

In terms of assembly, interacts (via the second PDZ domain) with CTNND2 (via the extreme C-terminus). Interacts (via the second PDZ domain) with PKP4 (via the extreme C-terminus); the interaction directs FRMPD2 to the basolateral membranes. Interacts (via the second PDZ domain) with ARVCF (via the extreme C-terminus). Interacts (via the second PDZ domain) with NMDAR subunits GRIN2A/GLUN2A and GRIN2B/GLUN2B (via the extreme C-terminus); the interaction is direct and is likely to promote NMDAR-mediated neural signal transmission. Binds GRIN2A with lower affinity than GRIN2B. Interacts (via the third PDZ domain) with LRIT1 (via the extreme C-terminus); the interaction leads to their colocalization in photoreceptor synapses. Interacts with NOD2; the interaction is likely to trigger NOD2-mediated nuclear factor kappaB activation.

The protein localises to the cytoplasm. The protein resides in the postsynaptic density. Its subcellular location is the basolateral cell membrane. It localises to the cell junction. It is found in the tight junction. In terms of biological role, functions as a scaffold protein and likely plays a role in N-methyl-D-aspartic acid receptor (NMDAR)-mediated synaptic excitatory transmission. May be involved in synapse formation in cone photoreceptor cells. May play a role in the regulation of tight junction formation. Binds phosphatidylinositol 3,4-bisphosphate (PtdIns(3,4)P2). May pNF-kappa-Blay a role in the regulation of NOD2-mediated NF-kappa-B activation in immune response. The chain is FERM and PDZ domain-containing protein 2 from Mus musculus (Mouse).